The following is a 195-amino-acid chain: Glycerol-3-phosphate acyltransferase 1 (195 aa).

Transmembrane regions (helical) follow at residues 6-26, 52-72, 74-94, 117-137, and 168-188; these read VILT…GHFL, LGIA…FLVV, LGLK…AVAG, LAVY…LTFL, and FGLG…ISLF.

This sequence belongs to the PlsY family. As to quaternary structure, probably interacts with PlsX.

The protein resides in the cell membrane. The catalysed reaction is an acyl phosphate + sn-glycerol 3-phosphate = a 1-acyl-sn-glycero-3-phosphate + phosphate. Its pathway is lipid metabolism; phospholipid metabolism. In terms of biological role, catalyzes the transfer of an acyl group from acyl-phosphate (acyl-PO(4)) to glycerol-3-phosphate (G3P) to form lysophosphatidic acid (LPA). This enzyme utilizes acyl-phosphate as fatty acyl donor, but not acyl-CoA or acyl-ACP. In Moorella thermoacetica (strain ATCC 39073 / JCM 9320), this protein is Glycerol-3-phosphate acyltransferase 1.